Here is a 408-residue protein sequence, read N- to C-terminus: Acetate kinase (408 aa).

Asn7 contributes to the Mg(2+) binding site. Lys14 provides a ligand contact to ATP. Arg91 is a substrate binding site. The Proton donor/acceptor role is filled by Asp148. Residues 208–212 (HLGNG), 283–285 (DFR), and 331–335 (GIGEN) contribute to the ATP site. Glu384 provides a ligand contact to Mg(2+).

It belongs to the acetokinase family. As to quaternary structure, homodimer. Mg(2+) is required as a cofactor. It depends on Mn(2+) as a cofactor.

It is found in the cytoplasm. It catalyses the reaction acetate + ATP = acetyl phosphate + ADP. The protein operates within metabolic intermediate biosynthesis; acetyl-CoA biosynthesis; acetyl-CoA from acetate: step 1/2. With respect to regulation, inhibited by diethylpyrocarbonate, hydroxylamine and phenylglyoxal. Functionally, catalyzes the formation of acetyl phosphate from acetate and ATP. Can also catalyze the reverse reaction. Can also phosphorylate propionate, but has very low activity toward butyrate. This is Acetate kinase from Methanosarcina thermophila.